The following is a 203-amino-acid chain: Orotate phosphoribosyltransferase (203 aa).

5-phospho-alpha-D-ribose 1-diphosphate contacts are provided by residues Arg94, Lys98, His100, and 120–128 (EDLISTGGS). Ser124 contributes to the orotate binding site.

This sequence belongs to the purine/pyrimidine phosphoribosyltransferase family. PyrE subfamily. As to quaternary structure, homodimer. Mg(2+) serves as cofactor.

It carries out the reaction orotidine 5'-phosphate + diphosphate = orotate + 5-phospho-alpha-D-ribose 1-diphosphate. The protein operates within pyrimidine metabolism; UMP biosynthesis via de novo pathway; UMP from orotate: step 1/2. Functionally, catalyzes the transfer of a ribosyl phosphate group from 5-phosphoribose 1-diphosphate to orotate, leading to the formation of orotidine monophosphate (OMP). The protein is Orotate phosphoribosyltransferase of Staphylococcus epidermidis (strain ATCC 35984 / DSM 28319 / BCRC 17069 / CCUG 31568 / BM 3577 / RP62A).